The primary structure comprises 331 residues: L-lactate dehydrogenase A chain (331 aa).

NAD(+)-binding positions include 29 to 57 (GMVGMASAISILLKDLCDELAMVDVMEDK) and arginine 98. Residues arginine 105, asparagine 137, and arginine 168 each contribute to the substrate site. Residue asparagine 137 coordinates NAD(+). The active-site Proton acceptor is histidine 192. Position 247 (threonine 247) interacts with substrate.

It belongs to the LDH/MDH superfamily. LDH family. As to quaternary structure, homotetramer.

The protein resides in the cytoplasm. It carries out the reaction (S)-lactate + NAD(+) = pyruvate + NADH + H(+). Its pathway is fermentation; pyruvate fermentation to lactate; (S)-lactate from pyruvate: step 1/1. Its function is as follows. Interconverts simultaneously and stereospecifically pyruvate and lactate with concomitant interconversion of NADH and NAD(+). This chain is L-lactate dehydrogenase A chain (ldha), found in Parachaenichthys charcoti (Charcot's dragonfish).